The chain runs to 361 residues: MSQNSLRLVEDNSVDKTKALDAALSQIERAFGKGSIMRLGQNDQVVEIETVSTGSLSLDIALGVGGLPKGRIVEIYGPESSGKTTLALHTIAEAQKKGGICAFVDAEHALDPVYARKLGVDLENLLISQPDTGEQALEITDTLVRSGAIDVLVVDSVAALTPRAEIEGEMGDSLPGLQARLMSQALRKLTGSISRSNCMVIFINQIRMKIGVMFGSPETTTGGNALKFYASVRLDIRRIGSIKERDEVMGNQTRVKVVKNKLAPPFKQVEFDIMYGAGVSKVGELVDLGVKAGVVEKSGAWFSYNSQRLGQGRENAKQYLKDNPEVAREIETTLRQNAGLIAEQFLDDGGPEEDAAGAAEM.

77–84 (GPESSGKT) contributes to the ATP binding site.

The protein belongs to the RecA family.

It localises to the cytoplasm. Can catalyze the hydrolysis of ATP in the presence of single-stranded DNA, the ATP-dependent uptake of single-stranded DNA by duplex DNA, and the ATP-dependent hybridization of homologous single-stranded DNAs. It interacts with LexA causing its activation and leading to its autocatalytic cleavage. This is Protein RecA from Brucella suis (strain ATCC 23445 / NCTC 10510).